Here is a 303-residue protein sequence, read N- to C-terminus: uncharacterized protein (303 aa).

This is an uncharacterized protein from Bacillus subtilis (strain 168).